Here is a 477-residue protein sequence, read N- to C-terminus: Glutamate--tRNA ligase 1 (477 aa).

The 'HIGH' region signature appears at 12–22; sequence PSPTGALHLGN. The 'KMSKS' region signature appears at 253-257; the sequence is PLSKR. An ATP-binding site is contributed by Lys-256.

The protein belongs to the class-I aminoacyl-tRNA synthetase family. Glutamate--tRNA ligase type 1 subfamily. Monomer.

The protein localises to the cytoplasm. The catalysed reaction is tRNA(Glu) + L-glutamate + ATP = L-glutamyl-tRNA(Glu) + AMP + diphosphate. In terms of biological role, catalyzes the attachment of glutamate to tRNA(Glu) in a two-step reaction: glutamate is first activated by ATP to form Glu-AMP and then transferred to the acceptor end of tRNA(Glu). This is Glutamate--tRNA ligase 1 from Halorhodospira halophila (strain DSM 244 / SL1) (Ectothiorhodospira halophila (strain DSM 244 / SL1)).